We begin with the raw amino-acid sequence, 493 residues long: Ketol-acid reductoisomerase (NADP(+)) (493 aa).

The 195-residue stretch at 14–208 folds into the KARI N-terminal Rossmann domain; that stretch reads LDQLGRCRFM…GGDRAGVLES (195 aa). Residues 45 to 48, Arg68, Arg76, Ser78, and 108 to 110 each bind NADP(+); these read CGAQ and DKQ. His132 is a catalytic residue. An NADP(+)-binding site is contributed by Gly158. 2 consecutive KARI C-terminal knotted domains span residues 209–345 and 346–486; these read SFVA…APKA and DGIK…MTDM. Mg(2+)-binding residues include Asp217, Glu221, Glu390, and Glu394. Ser415 contacts substrate.

It belongs to the ketol-acid reductoisomerase family. Mg(2+) serves as cofactor.

It carries out the reaction (2R)-2,3-dihydroxy-3-methylbutanoate + NADP(+) = (2S)-2-acetolactate + NADPH + H(+). The catalysed reaction is (2R,3R)-2,3-dihydroxy-3-methylpentanoate + NADP(+) = (S)-2-ethyl-2-hydroxy-3-oxobutanoate + NADPH + H(+). Its pathway is amino-acid biosynthesis; L-isoleucine biosynthesis; L-isoleucine from 2-oxobutanoate: step 2/4. It functions in the pathway amino-acid biosynthesis; L-valine biosynthesis; L-valine from pyruvate: step 2/4. Involved in the biosynthesis of branched-chain amino acids (BCAA). Catalyzes an alkyl-migration followed by a ketol-acid reduction of (S)-2-acetolactate (S2AL) to yield (R)-2,3-dihydroxy-isovalerate. In the isomerase reaction, S2AL is rearranged via a Mg-dependent methyl migration to produce 3-hydroxy-3-methyl-2-ketobutyrate (HMKB). In the reductase reaction, this 2-ketoacid undergoes a metal-dependent reduction by NADPH to yield (R)-2,3-dihydroxy-isovalerate. This chain is Ketol-acid reductoisomerase (NADP(+)), found in Actinobacillus succinogenes (strain ATCC 55618 / DSM 22257 / CCUG 43843 / 130Z).